We begin with the raw amino-acid sequence, 274 residues long: MNPEHSPLGKATVYANQYDASLLFPIPRAGAREQIGIGAPLPFFGTDIWNAYELSWLNARGKPQIAIATFYVPAESPNIVESKSFKLYLGSFAQTAFESADAVRDALKRDVSAACGASVTVRLATPAEFRKLQMDELDGLSLDRLDLDAHVYETDPSFLTASHDEAPVEETLVTDLLKSNCPVTGQPDWGSVQIHYVGAPIDHAGLLRYIISFRNHTGFHEQCVERIFVDILRACQPVKLAVYARYTRRGGLDINPFRTNYNQPMPDNARTARQ.

A substrate-binding site is contributed by 80-82 (VES). 82-83 (SK) contributes to the NADPH binding site. The active-site Thioimide intermediate is the Cys-181. Asp-188 (proton donor) is an active-site residue. Position 220 to 221 (220 to 221 (HE)) interacts with substrate. 249–250 (RG) contributes to the NADPH binding site.

It belongs to the GTP cyclohydrolase I family. QueF type 2 subfamily. In terms of assembly, homodimer.

Its subcellular location is the cytoplasm. It catalyses the reaction 7-aminomethyl-7-carbaguanine + 2 NADP(+) = 7-cyano-7-deazaguanine + 2 NADPH + 3 H(+). Its pathway is tRNA modification; tRNA-queuosine biosynthesis. In terms of biological role, catalyzes the NADPH-dependent reduction of 7-cyano-7-deazaguanine (preQ0) to 7-aminomethyl-7-deazaguanine (preQ1). The protein is NADPH-dependent 7-cyano-7-deazaguanine reductase of Burkholderia mallei (strain NCTC 10247).